Here is a 260-residue protein sequence, read N- to C-terminus: Type II methyltransferase M1.MboII (260 aa).

Residues cysteine 12, aspartate 30, lysine 197, serine 223–threonine 225, and aspartate 241–methionine 242 each bind S-adenosyl-L-methionine.

The protein belongs to the N(4)/N(6)-methyltransferase family. At low concentration exists as a monomer and homodimer. Probably binds to DNA as a monomer.

It carries out the reaction a 2'-deoxyadenosine in DNA + S-adenosyl-L-methionine = an N(6)-methyl-2'-deoxyadenosine in DNA + S-adenosyl-L-homocysteine + H(+). In terms of biological role, a beta subtype methylase that recognizes the double-stranded sequence 5'-GAAGA-3', methylates A-5 on the top strand, and protects the DNA from cleavage by the MboII endonuclease. It is not known if the cytosine of the complementary sequence TCTTC is also methylated by this enzyme. The protein is Type II methyltransferase M1.MboII of Moraxella bovis.